The chain runs to 675 residues: Putative exonuclease GOR (675 aa).

Residues 66-79 (VAKEAAPEASRHLG) show a composition bias toward basic and acidic residues. 2 disordered regions span residues 66–90 (VAKE…APEG) and 225–263 (AKRT…TATT). Positions 358–483 (MPGLSRAALY…VRDGRKESLD (126 aa)) are GOR1-125 epitope.

It belongs to the REXO1/REXO3 family.

The protein localises to the cytoplasm. It is found in the nucleus. The sequence is that of Putative exonuclease GOR (REXO1L1P) from Homo sapiens (Human).